The primary structure comprises 205 residues: Ribonuclease HII (205 aa).

One can recognise an RNase H type-2 domain in the interval 15-205 (SRVCGIDEAG…SFKLRKLGEK (191 aa)). Residues Asp21, Glu22, and Asp117 each coordinate a divalent metal cation.

Belongs to the RNase HII family. It depends on Mn(2+) as a cofactor. Mg(2+) is required as a cofactor.

Its subcellular location is the cytoplasm. The enzyme catalyses Endonucleolytic cleavage to 5'-phosphomonoester.. In terms of biological role, endonuclease that specifically degrades the RNA of RNA-DNA hybrids. This Chlorobaculum parvum (strain DSM 263 / NCIMB 8327) (Chlorobium vibrioforme subsp. thiosulfatophilum) protein is Ribonuclease HII.